Consider the following 74-residue polypeptide: Translation initiation factor IF-1, chloroplastic (74 aa).

Residues 1 to 72 (MERQNLIEME…TKGRITYRLR (72 aa)) form the S1-like domain.

It belongs to the IF-1 family. Component of the 30S ribosomal translation pre-initiation complex which assembles on the 30S ribosome in the order IF-2 and IF-3, IF-1 and N-formylmethionyl-tRNA(fMet); mRNA recruitment can occur at any time during PIC assembly.

The protein resides in the plastid. It localises to the chloroplast. One of the essential components for the initiation of protein synthesis. Stabilizes the binding of IF-2 and IF-3 on the 30S subunit to which N-formylmethionyl-tRNA(fMet) subsequently binds. Helps modulate mRNA selection, yielding the 30S pre-initiation complex (PIC). Upon addition of the 50S ribosomal subunit IF-1, IF-2 and IF-3 are released leaving the mature 70S translation initiation complex. The sequence is that of Translation initiation factor IF-1, chloroplastic from Mesostigma viride (Green alga).